The following is a 154-amino-acid chain: Calmodulin-like protein 4 (154 aa).

4 EF-hand domains span residues 7–42 (EQMV…LGLE), 43–78 (PTDQ…KMKD), 80–115 (DGDE…LGEK), and 116–151 (MTDE…AERK). Asp20, Asn22, Asp24, Cys26, Glu31, Asp56, Asp58, Asn60, Glu67, Asp93, Asp95, Asn97, and Glu104 together coordinate Ca(2+). An N6,N6,N6-trimethyllysine modification is found at Lys115. Positions 129, 131, 133, 135, and 140 each coordinate Ca(2+).

The protein belongs to the calmodulin family.

Its function is as follows. Potential calcium sensor. This is Calmodulin-like protein 4 (CML4) from Oryza sativa subsp. japonica (Rice).